A 591-amino-acid chain; its full sequence is Inactive metallocarboxypeptidase ECM14 (591 aa).

The first 21 residues, 1–21, serve as a signal peptide directing secretion; sequence MRLFAHLAVLAILACAVPITA. The propeptide occupies 22–175; sequence IPSFLSNSYP…QTIYESYPSS (154 aa). A Peptidase M14 domain is found at 203–523; it reads DYQPFSVIVP…NAVMVLGRFL (321 aa). Zn(2+) contacts are provided by His265 and Glu268. Substrate contacts are provided by residues 265–268, Arg323, and 340–341; these read HARE and DR. Cys334 and Cys357 form a disulfide bridge. N-linked (GlcNAc...) asparagine glycans are attached at residues Asn350, Asn381, and Asn386. His397 lines the Zn(2+) pocket. Residue 398–399 participates in substrate binding; the sequence is SY. The tract at residues 533–591 is disordered; it reads DWEDESQRPKAGEDDIPSDNELDENDDSWIPYDYRNHDDQNEGEGYDNDEWGFRRRRKR. 2 stretches are compositionally biased toward acidic residues: residues 546 to 559 and 573 to 582; these read DDIP…ENDD and NEGEGYDNDE.

It belongs to the peptidase M14 family. Zn(2+) is required as a cofactor.

It localises to the vacuole. It is found in the secreted. Its function is as follows. Inactive carboxypeptidase that may play a role in cell wall organization and biogenesis. The protein is Inactive metallocarboxypeptidase ECM14 (ECM14) of Paracoccidioides brasiliensis (strain Pb03).